Consider the following 48-residue polypeptide: ARRRHSMKKKRKSVRRRKTRKNQRKRKNSLGRSFKQHGFLKQPPRFRP.

The span at 1-29 (ARRRHSMKKKRKSVRRRKTRKNQRKRKNS) shows a compositional bias: basic residues. A disordered region spans residues 1–48 (ARRRHSMKKKRKSVRRRKTRKNQRKRKNSLGRSFKQHGFLKQPPRFRP).

In terms of tissue distribution, testis.

It is found in the nucleus. The protein localises to the chromosome. Protamines substitute for histones in the chromatin of sperm during the haploid phase of spermatogenesis. They compact sperm DNA into a highly condensed, stable and inactive complex. This chain is Sperm protamine R3 isoform 1, found in Hydrolagus colliei (Spotted ratfish).